Reading from the N-terminus, the 306-residue chain is Latrophilin receptor-like protein A (306 aa).

Residues 1–15 (MPSQLLNTVLSYLTD) are Extracellular-facing. A helical transmembrane segment spans residues 16-36 (ILLSLSIVGSFLTIFTFMLYP). The Cytoplasmic portion of the chain corresponds to 37-41 (KLRSY). The chain crosses the membrane as a helical span at residues 42–62 (PIKLIIYLCMSIVFSLFFFEI). Over 63–70 (SFRSSNSL) the chain is Extracellular. Residues 71–91 (FCIPAAILVHYFFLANFFWTF) traverse the membrane as a helical segment. Over 92-113 (SVSFNFFQMIVKRNRDSEFYER) the chain is Cytoplasmic. A helical transmembrane segment spans residues 114 to 134 (YYHLISWGIPFIIIIFCAAFK). Residues 135–152 (KYVDRGGFCYLEDQYSVY) lie on the Extracellular side of the membrane. Residues 153–173 (FGFFMPGVIIVCSNICIYVFV) traverse the membrane as a helical segment. Residues 174-196 (AKEIYKTLRHTPTQKRQTVKEFR) lie on the Cytoplasmic side of the membrane. A helical membrane pass occupies residues 197 to 217 (VYFSIFVSIGSSWIFGFIYMF). The Extracellular segment spans residues 218–222 (SDSNS). A helical transmembrane segment spans residues 223 to 243 (IIGYIFLILFSISTSLQGFFI). The Cytoplasmic segment spans residues 244 to 306 (FISYCLNYKV…TTTTTNVYSA (63 aa)). The tract at residues 279–306 (TTQSGPTGTTDSSSTMTSTTTTTNVYSA) is disordered.

It belongs to the G-protein coupled receptor 2 family. LN-TM7 subfamily.

The protein localises to the membrane. This chain is Latrophilin receptor-like protein A (lrlA), found in Dictyostelium discoideum (Social amoeba).